A 556-amino-acid polypeptide reads, in one-letter code: Tripartite motif-containing protein 16 (556 aa).

Residues 1–60 are disordered; it reads MAELDLIAPGPLTGVTAHPLAPLGPDPVSAIPVEKEDADPLSKSGEETQEQGHDPAELGA. The segment covering 33-56 has biased composition (basic and acidic residues); the sequence is VEKEDADPLSKSGEETQEQGHDPA. 2 B box-type zinc fingers span residues 64–113 and 117–156; these read EDQI…LTEP and QDLR…STVS. Ser-107 is modified (phosphoserine). Coiled-coil stretches lie at residues 163–266 and 312–332; these read NKEV…RLAA and NLIQ…REEE. A Phosphoserine modification is found at Ser-195. The 199-residue stretch at 347–545 folds into the B30.2/SPRY domain; sequence YRTSKPEPRT…RIVDLGEEPE (199 aa).

It belongs to the TRIM/RBCC family. As to quaternary structure, homodimerizes via its coiled-coil domain. Heterodimerizes with MID1, TRIM24 and PML. Interacts with Galectin-3/LGALS3 in a ULK1-dependent manner; this interaction mediates autophagy of damage endomembranes. Interacts with BECN1. Interacts with ATG16L1. Interacts with p62/SQSTM and LC3B/MAP1LC3B. Phosphorylated by ULK1. In terms of processing, auto-ubiquitinates via its B-Boxes. In terms of tissue distribution, widely expressed. Expressed in basal keratinocytes.

Its subcellular location is the cytoplasm. It carries out the reaction S-ubiquitinyl-[E2 ubiquitin-conjugating enzyme]-L-cysteine + [acceptor protein]-L-lysine = [E2 ubiquitin-conjugating enzyme]-L-cysteine + N(6)-ubiquitinyl-[acceptor protein]-L-lysine.. E3 ubiquitin ligase that plays an essential role in the organization of autophagic response and ubiquitination upon lysosomal and phagosomal damages. Plays a role in the stress-induced biogenesis and degradation of protein aggresomes by regulating the p62-KEAP1-NRF2 signaling and particularly by modulating the ubiquitination levels and thus stability of NRF2. Acts as a scaffold protein and facilitates autophagic degradation of protein aggregates by interacting with p62/SQSTM, ATG16L1 and LC3B/MAP1LC3B. In turn, protects the cell against oxidative stress-induced cell death as a consequence of endomembrane damage. In Mus musculus (Mouse), this protein is Tripartite motif-containing protein 16 (Trim16).